The sequence spans 707 residues: MNPQQQRMAAIGTDKELSDLLDFSAMFSPPVNSGKTRPTTLGSSQFSGSGMDERGGTTSWGTSGQPSPSYDSSRGFTDSPHYSDHLNDSRLGTHEGLSPTPFMNSNLIGKTSERGSFSLYSRDSGLSGCQSSLLRQDLGLGSPAQLSSSGKPGTPYYSFSATSSRRRPLHDSVALDPLQAKKVRKVPPGLPSSVYAPSPNSDDFNRESPSYPSPKPPTSMFASTFFMQDGTHSSSDLWSSSNGMSQPGFGGILGTSTSHMSQSSSYGSLHSHDRLSYPPHSVSPTDINTSLPPMSSFHRGSTSSSPYVAASHTPPINGSDSILGTRGNAAGSSQTGDALGKALASIYSPDHTSSSFPSNPSTPVGSPSPLTAGTSQWPRAGGQAPSSPSYENSLHSLKNRVEQQLHEHLQDAMSFLKDVCEQSRMEDRLDRLDDAIHVLRNHAVGPSTSLPTSHSDIHSLLGPSHNAPIGNLNSNYGGSSLVTNSRSASMVGTHREDSVSLNGNHSVLSSTVAASNTELNHKTPESFRGGVQNQSGSVVPTEIKTENKEKDENLHEPPSSDDMKSDDESSQKDIKVSSRGRTSSTNEDEDLNPEQKIEREKERRMANNARERLRVRDINEAFKELGRMCQLHLKSEKPQTKLLILHQAVAVILSLEQQVRERNLNPKAACLKRREEEKVSAASAEPPTTLPGTHPGLSETTNPMGHL.

Residues 25 to 109 form a disordered region; it reads AMFSPPVNSG…TPFMNSNLIG (85 aa). Polar residues-rich tracts occupy residues 30–48 and 56–76; these read PVNSGKTRPTTLGSSQFSG and GTTSWGTSGQPSPSYDSSRGF. A phosphoserine mark is found at S47, S67, and S79. A compositionally biased stretch (basic and acidic residues) spans 81–93; that stretch reads HYSDHLNDSRLGT. S98 is subject to Phosphoserine. A Glycyl lysine isopeptide (Lys-Gly) (interchain with G-Cter in SUMO2) cross-link involves residue K110. A phosphoserine mark is found at S116 and S124. Residues 119-140 are leucine-zipper; sequence LYSRDSGLSGCQSSLLRQDLGL. Disordered stretches follow at residues 140–222 and 249–313; these read LGSP…SMFA and FGGI…ASHT. Residues 144–163 show a composition bias toward polar residues; the sequence is AQLSSSGKPGTPYYSFSATS. A Glycyl lysine isopeptide (Lys-Gly) (interchain with G-Cter in SUMO2) cross-link involves residue K181. The span at 256–269 shows a compositional bias: low complexity; that stretch reads STSHMSQSSSYGSL. Positions 282-306 are enriched in polar residues; sequence VSPTDINTSLPPMSSFHRGSTSSSP. At T313 the chain carries Phosphothreonine. Residue S333 is modified to Phosphoserine. Disordered regions lie at residues 349–393 and 521–605; these read PDHT…YENS and HKTP…ERRM. Residues 352 to 363 are compositionally biased toward low complexity; sequence TSSSFPSNPSTP. 2 stretches are compositionally biased toward polar residues: residues 364–377 and 384–393; these read VGSPSPLTAGTSQW and APSSPSYENS. Basic and acidic residues-rich tracts occupy residues 543-555 and 561-576; these read IKTENKEKDENLH and DDMKSDDESSQKDIKV. Residue K544 forms a Glycyl lysine isopeptide (Lys-Gly) (interchain with G-Cter in SUMO2) linkage. The residue at position 565 (S565) is a Phosphoserine. K575 is covalently cross-linked (Glycyl lysine isopeptide (Lys-Gly) (interchain with G-Cter in SUMO2)). T582 carries the phosphothreonine modification. Phosphoserine occurs at positions 583 and 584. Residues 593 to 605 show a composition bias toward basic and acidic residues; the sequence is PEQKIEREKERRM. Residues 602 to 655 enclose the bHLH domain; sequence ERRMANNARERLRVRDINEAFKELGRMCQLHLKSEKPQTKLLILHQAVAVILSL. Residues K634 and K678 each participate in a glycyl lysine isopeptide (Lys-Gly) (interchain with G-Cter in SUMO2) cross-link. The segment at 657–680 is class A specific domain; the sequence is QQVRERNLNPKAACLKRREEEKVS. The interval 675–707 is disordered; that stretch reads EEEKVSAASAEPPTTLPGTHPGLSETTNPMGHL. Positions 686-697 are enriched in low complexity; it reads PPTTLPGTHPGL. Residues 698-707 are compositionally biased toward polar residues; that stretch reads SETTNPMGHL.

Efficient DNA binding requires dimerization with another bHLH protein. Forms homo- or heterooligomers with myogenin, E12 and ITF2 proteins. Interacts with PTF1. Interacts with RUNX1T1. Interacts with NEUROD2. Interacts with BHLHA9. In terms of tissue distribution, isoform gamma is highly expressed in lung, kidney, spleen, and is expressed at reduced levels in heart, muscle, liver, pituitary, brain and the trigeminal ganglion. The expression of isoform alpha predominates over isoform gamma in the pituitary and the brain.

It is found in the nucleus. Transcriptional regulator. Involved in the initiation of neuronal differentiation. Activates transcription by binding to the E box (5'-CANNTG-3'). May be involved in the functional network that regulates the development of the GnRH axis. This is Transcription factor 12 (Tcf12) from Rattus norvegicus (Rat).